The primary structure comprises 495 residues: Iroquois-class homeodomain protein irx-4-B (495 aa).

The homeobox; TALE-type DNA-binding region spans 141-203 (GSTRRKNATR…NARRRLKKEN (63 aa)). The interval 203 to 245 (NKMTWPPRNKCSDEKRPYDEEEEEEEDSQKATIKNEKKTVDEE) is disordered. Positions 235–245 (IKNEKKTVDEE) are enriched in basic and acidic residues.

This sequence belongs to the TALE/IRO homeobox family.

It is found in the nucleus. Its function is as follows. Acts partially redundantly with other irx members in neural patterning. Required for formation of the posterior forebrain, midbrain, hindbrain, and to a lesser extent, spinal cord. Patterns the neuroectoderm in both the anterior/posterior and dorsal/ventral axes. Does not appear to play a role in pronephros kidney development. The protein is Iroquois-class homeodomain protein irx-4-B (irx4-b) of Xenopus laevis (African clawed frog).